Here is a 702-residue protein sequence, read N- to C-terminus: Ribosomal RNA large subunit methyltransferase K/L (702 aa).

The 112-residue stretch at 43-154 (LVYQSLMWSR…KETASIALDL (112 aa)) folds into the THUMP domain.

Belongs to the methyltransferase superfamily. RlmKL family.

The protein resides in the cytoplasm. It catalyses the reaction guanosine(2445) in 23S rRNA + S-adenosyl-L-methionine = N(2)-methylguanosine(2445) in 23S rRNA + S-adenosyl-L-homocysteine + H(+). The enzyme catalyses guanosine(2069) in 23S rRNA + S-adenosyl-L-methionine = N(2)-methylguanosine(2069) in 23S rRNA + S-adenosyl-L-homocysteine + H(+). Functionally, specifically methylates the guanine in position 2445 (m2G2445) and the guanine in position 2069 (m7G2069) of 23S rRNA. The polypeptide is Ribosomal RNA large subunit methyltransferase K/L (Shigella boydii serotype 4 (strain Sb227)).